Here is a 222-residue protein sequence, read N- to C-terminus: Putative thymidylate synthase (222 aa).

Residue C146 is part of the active site.

This sequence belongs to the thymidylate synthase family. Archaeal-type ThyA subfamily. As to quaternary structure, monomer.

The protein localises to the cytoplasm. It functions in the pathway pyrimidine metabolism; dTTP biosynthesis. Its function is as follows. May catalyze the biosynthesis of dTMP using an unknown cosubstrate. In Methanothermobacter thermautotrophicus (strain ATCC 29096 / DSM 1053 / JCM 10044 / NBRC 100330 / Delta H) (Methanobacterium thermoautotrophicum), this protein is Putative thymidylate synthase.